A 158-amino-acid chain; its full sequence is GTP-dependent dephospho-CoA kinase (158 aa).

Residues Asp35, Val36, Asp54, Lys56, Glu109, and Asp132 each contribute to the GTP site.

This sequence belongs to the GTP-dependent DPCK family.

It carries out the reaction 3'-dephospho-CoA + GTP = GDP + CoA + H(+). Its pathway is cofactor biosynthesis; coenzyme A biosynthesis. Functionally, catalyzes the GTP-dependent phosphorylation of the 3'-hydroxyl group of dephosphocoenzyme A to form coenzyme A (CoA). The polypeptide is GTP-dependent dephospho-CoA kinase (Methanococcus maripaludis (strain C5 / ATCC BAA-1333)).